Consider the following 315-residue polypeptide: Glycine--tRNA ligase alpha subunit (315 aa).

The protein belongs to the class-II aminoacyl-tRNA synthetase family. Tetramer of two alpha and two beta subunits.

It localises to the cytoplasm. It carries out the reaction tRNA(Gly) + glycine + ATP = glycyl-tRNA(Gly) + AMP + diphosphate. The polypeptide is Glycine--tRNA ligase alpha subunit (Pseudomonas entomophila (strain L48)).